A 153-amino-acid polypeptide reads, in one-letter code: Interleukin-4 (153 aa).

The first 24 residues, 1–24, serve as a signal peptide directing secretion; sequence MGLTSQLLPPLFFLLACAGNFAHG. 3 disulfides stabilise this stretch: cysteine 27-cysteine 151, cysteine 48-cysteine 89, and cysteine 70-cysteine 123. Residue asparagine 62 is glycosylated (N-linked (GlcNAc...) asparagine). Residue asparagine 129 is glycosylated (N-linked (GlcNAc...) asparagine).

The protein belongs to the IL-4/IL-13 family.

Its subcellular location is the secreted. Functionally, participates in at least several B-cell activation processes as well as of other cell types. It is a costimulator of DNA-synthesis. It induces the expression of class II MHC molecules on resting B-cells. It enhances both secretion and cell surface expression of IgE and IgG1. It also regulates the expression of the low affinity Fc receptor for IgE (CD23) on both lymphocytes and monocytes. Positively regulates IL31RA expression in macrophages. Stimulates autophagy in dendritic cells by interfering with mTORC1 signaling and through the induction of RUFY4. This chain is Interleukin-4 (IL4), found in Macaca mulatta (Rhesus macaque).